We begin with the raw amino-acid sequence, 343 residues long: tRNA-splicing endonuclease (343 aa).

Active-site residues include Tyr277, His288, and Lys319.

This sequence belongs to the tRNA-intron endonuclease family. Archaeal long subfamily. In terms of assembly, homodimer.

It catalyses the reaction pretRNA = a 3'-half-tRNA molecule with a 5'-OH end + a 5'-half-tRNA molecule with a 2',3'-cyclic phosphate end + an intron with a 2',3'-cyclic phosphate and a 5'-hydroxyl terminus.. Functionally, endonuclease that removes tRNA introns. Cleaves pre-tRNA at the 5' and 3' splice sites to release the intron. The products are an intron and two tRNA half-molecules bearing 2',3' cyclic phosphate and 5'-OH termini. Recognizes a pseudosymmetric substrate in which 2 bulged loops of 3 bases are separated by a stem of 4 bp. In Halobacterium salinarum (strain ATCC 29341 / DSM 671 / R1), this protein is tRNA-splicing endonuclease.